The primary structure comprises 266 residues: MSEQSSKYIAALLAVLSISMVLGIDLFIFSLQSEKQTMPHLGVGVLVAQLISLLVFYRGEICPGQRGRLIKVNMTFAIYWAVWLLISLLQNNHTLTNVMSVCGLSVVYFIWKQPKTEKIRNSFLLMAALIAGLGCLSYLMIFTELPASDFAEYNPFAPILSGVILANLVLVIARNRLQGFIALLPLAMIILLALNALAMFLFLLLNGMESAVNSESVFAYIIYFVCHFVIAAILILHSFQKWTLSTNSLFILLFIAVCLPLWMVFV.

A run of 8 helical transmembrane segments spans residues 9 to 29 (IAAL…LFIF), 37 to 57 (TMPH…LVFY), 69 to 89 (LIKV…ISLL), 123 to 143 (FLLM…MIFT), 153 to 173 (YNPF…LVIA), 184 to 204 (LPLA…LFLL), 216 to 236 (SVFA…ILIL), and 246 to 266 (TNSL…MVFV).

The protein resides in the cell membrane. This is an uncharacterized protein from Haemophilus influenzae (strain ATCC 51907 / DSM 11121 / KW20 / Rd).